The chain runs to 331 residues: Tryptophan--tRNA ligase 1 (331 aa).

ATP is bound by residues 9–11 (KPT) and 17–18 (GN). A 'HIGH' region motif is present at residues 10–18 (PTGHLTLGN). Residue aspartate 137 coordinates L-tryptophan. Residues 149 to 151 (GDD), valine 188, and 197 to 201 (KMGKS) contribute to the ATP site. The 'KMSKS' region motif lies at 197–201 (KMGKS).

It belongs to the class-I aminoacyl-tRNA synthetase family. As to quaternary structure, homodimer.

The protein resides in the cytoplasm. The enzyme catalyses tRNA(Trp) + L-tryptophan + ATP = L-tryptophyl-tRNA(Trp) + AMP + diphosphate + H(+). In terms of biological role, catalyzes the attachment of tryptophan to tRNA(Trp). The chain is Tryptophan--tRNA ligase 1 from Streptomyces avermitilis (strain ATCC 31267 / DSM 46492 / JCM 5070 / NBRC 14893 / NCIMB 12804 / NRRL 8165 / MA-4680).